The following is a 427-amino-acid chain: Gamma-glutamyl phosphate reductase (427 aa).

The protein belongs to the gamma-glutamyl phosphate reductase family.

Its subcellular location is the cytoplasm. It carries out the reaction L-glutamate 5-semialdehyde + phosphate + NADP(+) = L-glutamyl 5-phosphate + NADPH + H(+). It functions in the pathway amino-acid biosynthesis; L-proline biosynthesis; L-glutamate 5-semialdehyde from L-glutamate: step 2/2. Its function is as follows. Catalyzes the NADPH-dependent reduction of L-glutamate 5-phosphate into L-glutamate 5-semialdehyde and phosphate. The product spontaneously undergoes cyclization to form 1-pyrroline-5-carboxylate. This is Gamma-glutamyl phosphate reductase from Gluconobacter oxydans (strain 621H) (Gluconobacter suboxydans).